The sequence spans 173 residues: Small ribosomal subunit protein uS10m (173 aa).

The protein belongs to the universal ribosomal protein uS10 family. In terms of assembly, component of the mitochondrial ribosome small subunit (28S) which comprises a 12S rRNA and about 30 distinct proteins.

It localises to the mitochondrion. The sequence is that of Small ribosomal subunit protein uS10m (mRpS10) from Drosophila melanogaster (Fruit fly).